We begin with the raw amino-acid sequence, 387 residues long: Dynactin subunit 2 (387 aa).

3 coiled-coil regions span residues 99-125, 256-282, and 355-387; these read LQRCHRLKCEMNELMEEIEASRADTGR, SQLDTIEQRLNNLLQQMNSIQEKSNAT, and TGVQEAFAQNLENVNKEVKKLEERMTKLQQMIK.

This sequence belongs to the dynactin subunit 2 family. Subunit of dynactin, a multiprotein complex associated with dynein.

It is found in the cytoplasm. The protein resides in the cytoskeleton. The protein localises to the membrane. Functionally, modulates cytoplasmic dynein binding to an organelle, and plays a role in prometaphase chromosome alignment and spindle organization during mitosis. This chain is Dynactin subunit 2, found in Anopheles gambiae (African malaria mosquito).